We begin with the raw amino-acid sequence, 493 residues long: MHLPSLSVALALVSSSLALPQTVLPESDVSSHAAAVKEAFSHAWDGYMKYAFPHDELLPISNSYGDSRNGWGASAVDALSTAIVMRNATIVNQILDHIAKIDYSKTSDTVSLFETTIRYLGGMLSGYDLLKGPAADLVKDSTKVDMLLQQSKNLGDVLKFAFDTPSGVPYNNINITSHGNDGATTNGLAVTGTLVLEWTRLSDLTGDQEYAKLSQRAESYLLAPQPSSGEPFPGLVGSEISIQTGQFTNGFVSWNGGSDSFYEYLMKMYVYDPKRFATYKDRWVAAAESSIDHLASSPASRPDLTFLATYNKGSLGLSSQHLACFDGGSYLLGGTVLDRADLIDFGLKLVDGCAETYHQTLTGIGPESFGWDEKSVPADQKEFYERAGFYVQSGAYILRPEVIESFYYAYRVTGKKQYRDWVWNAFVNINKYCRTGSGFAGLTDVNAVNGGNRYDNQESFLFAEVMKYAYLTHAPGMSPISIADEDKANESRG.

The N-terminal stretch at 1–18 is a signal peptide; sequence MHLPSLSVALALVSSSLA. N-linked (GlcNAc...) asparagine glycans are attached at residues Asn87 and Asn174. Cys324 and Cys353 are oxidised to a cystine. Residue Glu367 is the Proton donor of the active site. Asn489 is a glycosylation site (N-linked (GlcNAc...) asparagine).

It belongs to the glycosyl hydrolase 47 family. As to quaternary structure, monomer. Requires Ca(2+) as cofactor. Mg(2+) is required as a cofactor.

It is found in the cytoplasmic vesicle lumen. It carries out the reaction N(4)-(alpha-D-Man-(1-&gt;2)-alpha-D-Man-(1-&gt;2)-alpha-D-Man-(1-&gt;3)-[alpha-D-Man-(1-&gt;2)-alpha-D-Man-(1-&gt;3)-[alpha-D-Man-(1-&gt;2)-alpha-D-Man-(1-&gt;6)]-alpha-D-Man-(1-&gt;6)]-beta-D-Man-(1-&gt;4)-beta-D-GlcNAc-(1-&gt;4)-beta-D-GlcNAc)-L-asparaginyl-[protein] (N-glucan mannose isomer 9A1,2,3B1,2,3) + 4 H2O = N(4)-(alpha-D-Man-(1-&gt;3)-[alpha-D-Man-(1-&gt;3)-[alpha-D-Man-(1-&gt;6)]-alpha-D-Man-(1-&gt;6)]-beta-D-Man-(1-&gt;4)-beta-D-GlcNAc-(1-&gt;4)-beta-D-GlcNAc)-L-asparaginyl-[protein] (N-glucan mannose isomer 5A1,2) + 4 beta-D-mannose. The enzyme catalyses N(4)-(alpha-D-Man-(1-&gt;2)-alpha-D-Man-(1-&gt;2)-alpha-D-Man-(1-&gt;3)-[alpha-D-Man-(1-&gt;3)-[alpha-D-Man-(1-&gt;2)-alpha-D-Man-(1-&gt;6)]-alpha-D-Man-(1-&gt;6)]-beta-D-Man-(1-&gt;4)-beta-D-GlcNAc-(1-&gt;4)-beta-D-GlcNAc)-L-asparaginyl-[protein] (N-glucan mannose isomer 8A1,2,3B1,3) + 3 H2O = N(4)-(alpha-D-Man-(1-&gt;3)-[alpha-D-Man-(1-&gt;3)-[alpha-D-Man-(1-&gt;6)]-alpha-D-Man-(1-&gt;6)]-beta-D-Man-(1-&gt;4)-beta-D-GlcNAc-(1-&gt;4)-beta-D-GlcNAc)-L-asparaginyl-[protein] (N-glucan mannose isomer 5A1,2) + 3 beta-D-mannose. The protein operates within protein modification; protein glycosylation. Its function is as follows. Involved in the maturation of Asn-linked oligosaccharides. Progressively trims alpha-1,2-linked mannose residues from Man(9)GlcNAc(2) to produce Man(5)GlcNAc(2). This chain is Probable mannosyl-oligosaccharide alpha-1,2-mannosidase 1B (mns1B), found in Neosartorya fischeri (strain ATCC 1020 / DSM 3700 / CBS 544.65 / FGSC A1164 / JCM 1740 / NRRL 181 / WB 181) (Aspergillus fischerianus).